Reading from the N-terminus, the 872-residue chain is Probable LRR receptor-like serine/threonine-protein kinase At1g51880 (872 aa).

The first 23 residues, 1–23 (MKSIHGFLLFLITAYVILESVQA), serve as a signal peptide directing secretion. Over 24 to 513 (QDQLGFISLD…GKSKKVPMIP (490 aa)) the chain is Extracellular. Asn-40, Asn-49, Asn-96, Asn-181, Asn-255, Asn-268, Asn-294, Asn-339, and Asn-401 each carry an N-linked (GlcNAc...) asparagine glycan. LRR repeat units follow at residues 411–434 (RIISLNLAENKLTGTITPEISKLT), 435–457 (QLIELDLSKNDLSGEIPEFFADM), and 459–482 (LLKLINLSGNLGLNSTIPDSIQQR). N-linked (GlcNAc...) asparagine glycosylation is found at Asn-464 and Asn-472. A helical transmembrane segment spans residues 514–534 (IVASVAGVFALLVILAIFFVV). Residues 535-872 (RRKNGESNKG…SASEFSPGAR (338 aa)) are Cytoplasmic-facing. Thr-557 is subject to Phosphothreonine. One can recognise a Protein kinase domain in the interval 566-838 (NNFERVLGKG…HVVTELNECV (273 aa)). ATP is bound by residues 572–580 (LGKGGFGTV) and Lys-593. A Phosphotyrosine modification is found at Tyr-638. The active-site Proton acceptor is Asp-690. Residue Ser-724 is modified to Phosphoserine. A phosphothreonine mark is found at Thr-725 and Thr-730. At Tyr-738 the chain carries Phosphotyrosine.

It belongs to the protein kinase superfamily. Ser/Thr protein kinase family.

The protein localises to the membrane. It catalyses the reaction L-seryl-[protein] + ATP = O-phospho-L-seryl-[protein] + ADP + H(+). It carries out the reaction L-threonyl-[protein] + ATP = O-phospho-L-threonyl-[protein] + ADP + H(+). The polypeptide is Probable LRR receptor-like serine/threonine-protein kinase At1g51880 (Arabidopsis thaliana (Mouse-ear cress)).